A 342-amino-acid polypeptide reads, in one-letter code: Glycerol-3-phosphate dehydrogenase [NAD(P)+] (342 aa).

Ser13, Trp14, and Lys108 together coordinate NADPH. The sn-glycerol 3-phosphate site is built by Lys108, Gly139, and Ser141. Position 143 (Ala143) interacts with NADPH. The sn-glycerol 3-phosphate site is built by Lys194, Asp247, Ser257, Arg258, and Asn259. Lys194 serves as the catalytic Proton acceptor. An NADPH-binding site is contributed by Arg258. NADPH-binding residues include Val282 and Glu284.

Belongs to the NAD-dependent glycerol-3-phosphate dehydrogenase family.

The protein resides in the cytoplasm. The enzyme catalyses sn-glycerol 3-phosphate + NAD(+) = dihydroxyacetone phosphate + NADH + H(+). It carries out the reaction sn-glycerol 3-phosphate + NADP(+) = dihydroxyacetone phosphate + NADPH + H(+). Its pathway is membrane lipid metabolism; glycerophospholipid metabolism. In terms of biological role, catalyzes the reduction of the glycolytic intermediate dihydroxyacetone phosphate (DHAP) to sn-glycerol 3-phosphate (G3P), the key precursor for phospholipid synthesis. This Lactococcus lactis subsp. cremoris (strain MG1363) protein is Glycerol-3-phosphate dehydrogenase [NAD(P)+].